A 352-amino-acid chain; its full sequence is Homeobox protein Mohawk (352 aa).

The interval 19–53 (GASERERGGRPYSGVLDSPHARPEVGIADGPPLKD) is disordered. The homeobox; TALE-type DNA-binding region spans 71-132 (VRHKRQALQD…NARRRLKNTV (62 aa)). Disordered regions lie at residues 157–194 (LSVSSDDSCSEGGENPPRTHMNEGGYNTPVHHPVIKSE) and 245–272 (TRQRNHSGSFSSNEFEEELVSPSSSETE).

This sequence belongs to the TALE/IRO homeobox family.

Its subcellular location is the nucleus. May act as a morphogenetic regulator of cell adhesion. The chain is Homeobox protein Mohawk (MKX) from Pongo abelii (Sumatran orangutan).